Here is a 518-residue protein sequence, read N- to C-terminus: Centromere protein T (518 aa).

The tract at residues 1 to 70 (MADLSSPDGD…RKHSHGTGSV (70 aa)) is disordered. The span at 19 to 28 (HVLDTADSHT) shows a compositional bias: basic and acidic residues. The segment covering 34-57 (STQTNPQRRRSQTPYSKRQGSQRK) has biased composition (polar residues). Thr-86 is subject to Phosphothreonine. The flexible stalk domain stretch occupies residues 94–381 (ILLTAPESST…EPHQLFEPPP (288 aa)). Disordered regions lie at residues 102–156 (STVM…KRKQ), 271–362 (VHHS…ELSS), and 375–412 (QLFE…HQDP). The span at 294–306 (TPSTGTRPQSQMS) shows a compositional bias: polar residues. A phosphoserine mark is found at Ser-313, Ser-324, Ser-333, Ser-345, Ser-346, Ser-357, and Ser-382. The segment covering 326-343 (ELREAVGSKEAEEPKDLE) has biased composition (basic and acidic residues). The span at 384–395 (GVAAVSSESVPA) shows a compositional bias: low complexity.

The protein belongs to the CENP-T/CNN1 family. As to quaternary structure, component of the CENPA-CAD complex, composed of CENPI, CENPK, CENPL, CENPO, CENPP, CENPQ, CENPR and CENPS. The CENPA-CAD complex is probably recruited on centromeres by the CENPA-NAC complex, at least composed of CENPA, CENPC, CENPH, CENPM, CENPN, CENPT and CENPU. Identified in a centromeric complex containing histones H2A, H2B, H3 and H4, and at least CENPA, CENPB, CENPC, CENPT, CENPN, HJURP, SUPT16H, SSRP1 and RSF1. Interacts (via N-terminus) with the NDC80 complex. Heterodimer with CENPW; this dimer coassembles with CENPS-CENPX heterodimers at centromeres to form the tetrameric CENP-T-W-S-X complex. Post-translationally, dynamically phosphorylated during the cell cycle. Phosphorylated during G2 phase, metaphase and anaphase, but not during telophase or G1 phase.

It localises to the nucleus. Its subcellular location is the chromosome. It is found in the centromere. The protein resides in the kinetochore. In terms of biological role, component of the CENPA-NAC (nucleosome-associated) complex, a complex that plays a central role in assembly of kinetochore proteins, mitotic progression and chromosome segregation. The CENPA-NAC complex recruits the CENPA-CAD (nucleosome distal) complex and may be involved in incorporation of newly synthesized CENPA into centromeres. Part of a nucleosome-associated complex that binds specifically to histone H3-containing nucleosomes at the centromere, as opposed to nucleosomes containing CENPA. Component of the heterotetrameric CENP-T-W-S-X complex that binds and supercoils DNA, and plays an important role in kinetochore assembly. CENPT has a fundamental role in kinetochore assembly and function. It is one of the inner kinetochore proteins, with most further proteins binding downstream. Required for normal chromosome organization and normal progress through mitosis. This Rattus norvegicus (Rat) protein is Centromere protein T (Cenpt).